The sequence spans 270 residues: Putative pyruvate, phosphate dikinase regulatory protein 2 (270 aa).

151–158 (GVSRTSKT) contacts ADP.

This sequence belongs to the pyruvate, phosphate/water dikinase regulatory protein family. PDRP subfamily.

The catalysed reaction is N(tele)-phospho-L-histidyl/L-threonyl-[pyruvate, phosphate dikinase] + ADP = N(tele)-phospho-L-histidyl/O-phospho-L-threonyl-[pyruvate, phosphate dikinase] + AMP + H(+). The enzyme catalyses N(tele)-phospho-L-histidyl/O-phospho-L-threonyl-[pyruvate, phosphate dikinase] + phosphate + H(+) = N(tele)-phospho-L-histidyl/L-threonyl-[pyruvate, phosphate dikinase] + diphosphate. In terms of biological role, bifunctional serine/threonine kinase and phosphorylase involved in the regulation of the pyruvate, phosphate dikinase (PPDK) by catalyzing its phosphorylation/dephosphorylation. The chain is Putative pyruvate, phosphate dikinase regulatory protein 2 from Listeria monocytogenes serotype 4b (strain F2365).